The sequence spans 249 residues: Small ribosomal subunit protein uS2 (249 aa).

This sequence belongs to the universal ribosomal protein uS2 family.

The polypeptide is Small ribosomal subunit protein uS2 (Chlorobaculum tepidum (strain ATCC 49652 / DSM 12025 / NBRC 103806 / TLS) (Chlorobium tepidum)).